A 45-amino-acid polypeptide reads, in one-letter code: Large ribosomal subunit protein bL34 (45 aa).

The tract at residues 22–45 is disordered; that stretch reads RMRTKSGQNVIKARRRKGRARLTV. Basic residues predominate over residues 33-45; it reads KARRRKGRARLTV.

It belongs to the bacterial ribosomal protein bL34 family.

The protein is Large ribosomal subunit protein bL34 of Thermosynechococcus vestitus (strain NIES-2133 / IAM M-273 / BP-1).